Consider the following 339-residue polypeptide: UDP-N-acetylglucosamine--N-acetylmuramyl-(pentapeptide) pyrophosphoryl-undecaprenol N-acetylglucosamine transferase (339 aa).

Residues 11 to 13 (TGG), Asn-127, Arg-170, Ser-188, Ile-235, and Gln-280 contribute to the UDP-N-acetyl-alpha-D-glucosamine site.

The protein belongs to the glycosyltransferase 28 family. MurG subfamily.

The protein resides in the cell inner membrane. It catalyses the reaction di-trans,octa-cis-undecaprenyl diphospho-N-acetyl-alpha-D-muramoyl-L-alanyl-D-glutamyl-meso-2,6-diaminopimeloyl-D-alanyl-D-alanine + UDP-N-acetyl-alpha-D-glucosamine = di-trans,octa-cis-undecaprenyl diphospho-[N-acetyl-alpha-D-glucosaminyl-(1-&gt;4)]-N-acetyl-alpha-D-muramoyl-L-alanyl-D-glutamyl-meso-2,6-diaminopimeloyl-D-alanyl-D-alanine + UDP + H(+). Its pathway is cell wall biogenesis; peptidoglycan biosynthesis. Its function is as follows. Cell wall formation. Catalyzes the transfer of a GlcNAc subunit on undecaprenyl-pyrophosphoryl-MurNAc-pentapeptide (lipid intermediate I) to form undecaprenyl-pyrophosphoryl-MurNAc-(pentapeptide)GlcNAc (lipid intermediate II). The chain is UDP-N-acetylglucosamine--N-acetylmuramyl-(pentapeptide) pyrophosphoryl-undecaprenol N-acetylglucosamine transferase from Thermotoga maritima (strain ATCC 43589 / DSM 3109 / JCM 10099 / NBRC 100826 / MSB8).